Reading from the N-terminus, the 690-residue chain is Heterogeneous nuclear ribonucleoprotein M (690 aa).

The segment covering 1-13 (MAAGVEAAAEVAA) has biased composition (low complexity). Positions 1 to 63 (MAAGVEAAAE…KRGGNRFEPY (63 aa)) are disordered. The residue at position 2 (alanine 2) is an N-acetylalanine. A Glycyl lysine isopeptide (Lys-Gly) (interchain with G-Cter in SUMO2) cross-link involves residue lysine 17. At serine 29 the chain carries Phosphoserine. Residues lysine 37, lysine 68, and lysine 82 each participate in a glycyl lysine isopeptide (Lys-Gly) (interchain with G-Cter in SUMO2) cross-link. Over residues 37-49 (KGEERPTQNEKRK) the composition is skewed to basic and acidic residues. 2 RRM domains span residues 70-148 (YRAF…EDPD) and 164-241 (STVF…MDER). Serine 85 is subject to Phosphoserine. Residues lysine 87 and lysine 126 each participate in a glycyl lysine isopeptide (Lys-Gly) (interchain with G-Cter in SUMO2) cross-link. Lysine 133 is subject to N6-acetyllysine; alternate. Residue lysine 133 forms a Glycyl lysine isopeptide (Lys-Gly) (interchain with G-Cter in SUMO2); alternate linkage. Glycyl lysine isopeptide (Lys-Gly) (interchain with G-Cter in SUMO2) cross-links involve residues lysine 142 and lysine 144. Serine 164 is modified (phosphoserine). Lysine 181 participates in a covalent cross-link: Glycyl lysine isopeptide (Lys-Gly) (interchain with G-Cter in SUMO2). Lysine 237 is modified (N6-acetyllysine; alternate). A Glycyl lysine isopeptide (Lys-Gly) (interchain with G-Cter in SUMO2); alternate cross-link involves residue lysine 237. Residues lysine 245 and lysine 305 each participate in a glycyl lysine isopeptide (Lys-Gly) (interchain with G-Cter in SUMO2) cross-link. Phosphoserine is present on residues serine 325 and serine 337. Residues lysine 341 and lysine 348 each participate in a glycyl lysine isopeptide (Lys-Gly) (interchain with G-Cter in SUMO2) cross-link. Serine 357 is modified (phosphoserine). 4 consecutive repeat copies span residues 360–365 (GIERMG), 367–372 (GIDRIS), 375–380 (GMERMG), and 386–391 (GMDRVG). The tract at residues 360–568 (GIERMGPGID…ALGAGIERMG (209 aa)) is 27 X 6 AA repeats of [GEVSTPAN]-[ILMV]-[DE]-[RH]-[MLVI]-[GAV]. Serine 392 bears the Phosphoserine mark. A run of 3 repeats spans residues 393-398 (EIERMG), 400-405 (VMDRMG), and 406-411 (SVERMG). Serine 412 carries the phosphoserine modification. 4 repeat units span residues 413–418 (GIERMG), 421–426 (GLDHMA), 428–433 (SIERMG), and 435–440 (TMERIG). Serine 428 carries the post-translational modification Phosphoserine. A Phosphoserine modification is found at serine 441. 16 repeat units span residues 442–447 (GVERMG), 453–458 (GLERMA), 460–465 (PIDRVG), 467–472 (TIERMG), 474–479 (GVERMG), 481–486 (AIERMG), 488–493 (SMDRMV), 500–505 (GLERMG), 507–512 (VMDRMA), 514–519 (GLERMG), 522–527 (NLERMG), 528–532 (LERMG), 535–540 (SLERMG), 541–545 (LERMG), 548–553 (SLERMG), and 563–568 (GIERMG). Omega-N-methylarginine is present on arginine 456. Position 488 is a phosphoserine (serine 488). At serine 535 the chain carries Phosphoserine. A Phosphoserine modification is found at serine 548. Phosphoserine is present on residues serine 578, serine 593, and serine 597. Residue lysine 611 forms a Glycyl lysine isopeptide (Lys-Gly) (interchain with G-Cter in SUMO2) linkage. Positions 613 to 689 (CQIFVRNLPF…REIDVRIDRN (77 aa)) constitute an RRM 3 domain. A Phosphothreonine modification is found at threonine 625. Lysine 627 is covalently cross-linked (Glycyl lysine isopeptide (Lys-Gly) (interchain with G-Cter in SUMO2)). The residue at position 632 (lysine 632) is an N6-acetyllysine. Glycyl lysine isopeptide (Lys-Gly) (interchain with G-Cter in SUMO2) cross-links involve residues lysine 645 and lysine 652. Lysine 658 bears the N6-acetyllysine; alternate mark. Lysine 658 is covalently cross-linked (Glycyl lysine isopeptide (Lys-Gly) (interchain with G-Cter in SUMO2); alternate). A Glycyl lysine isopeptide (Lys-Gly) (interchain with G-Cter in SUMO1); alternate cross-link involves residue lysine 658. Phosphoserine is present on serine 661. Lysine 676 participates in a covalent cross-link: Glycyl lysine isopeptide (Lys-Gly) (interchain with G-Cter in SUMO2).

Identified in the spliceosome C complex. Interacts with PPIA/CYPA. In terms of processing, sumoylated. In terms of tissue distribution, expressed in all tissues tested, including liver, heart, lung, skeletal muscle, kidney, stomach, large intestine, small intestine, pancreas, spleen, peritoneal macrophage and thyroid.

It is found in the nucleus matrix. Pre-mRNA binding protein, binds avidly to poly(G) and poly(U) RNA homopolymers. Involved in splicing. Acts as a receptor for carcinoembryonic antigen in Kupffer cells, may initiate a series of signaling events leading to tyrosine phosphorylation of proteins and induction of IL-1 alpha, IL-6, IL-10 and tumor necrosis factor alpha cytokines. The protein is Heterogeneous nuclear ribonucleoprotein M (Hnrnpm) of Rattus norvegicus (Rat).